The sequence spans 98 residues: uncharacterized protein (98 aa).

It is found in the cytoplasm. This is an uncharacterized protein from Saccharomyces cerevisiae (strain ATCC 204508 / S288c) (Baker's yeast).